A 1089-amino-acid chain; its full sequence is Platelet-derived growth factor receptor alpha (1089 aa).

The N-terminal stretch at 1–24 is a signal peptide; the sequence is MGTSHQVFLVLSCLLTGPGLISCQ. Ig-like C2-type domains lie at 25-113, 117-201, 202-306, 319-410, and 414-517; these read LLLP…SEIE, IYIY…FKTS, EFNV…KRVT, PTFG…FELS, and PASI…LKLV. The Extracellular portion of the chain corresponds to 25-528; it reads LLLPSILPNE…PTLRSELTVA (504 aa). N42, N76, N89, N103, and N179 each carry an N-linked (GlcNAc...) asparagine glycan. C49 and C100 are disulfide-bonded. Intrachain disulfides connect C150-C189 and C235-C290. N-linked (GlcNAc...) asparagine glycans are attached at residues N353, N359, N458, N468, and N506. A disulfide bond links C435 and C501. A helical membrane pass occupies residues 529–549; sequence AAVLVLLVIVIVSLIVLVVIW. Topologically, residues 550-1089 are cytoplasmic; the sequence is KQKPRYEIRW…SSDLVEDSFL (540 aa). Phosphotyrosine; by autocatalysis is present on residues Y572 and Y574. Residues 593–954 enclose the Protein kinase domain; sequence LVLGRILGSG…HLSEIVENLL (362 aa). Residues 599–607 and K627 each bind ATP; that span reads LGSGAFGKV. Residues Y720, Y731, Y742, Y754, Y762, and Y768 each carry the phosphotyrosine; by autocatalysis modification. Catalysis depends on D818, which acts as the Proton acceptor. Y849, Y988, and Y1018 each carry phosphotyrosine; by autocatalysis. The disordered stretch occupies residues 1018–1089; the sequence is YIIPLPDIDP…SSDLVEDSFL (72 aa). A compositionally biased stretch (polar residues) spans 1041 to 1059; the sequence is SSQTSEESAIETGSSSSTF. Acidic residues predominate over residues 1065 to 1089; sequence ETIEDIDMMDDIGIDSSDLVEDSFL.

It belongs to the protein kinase superfamily. Tyr protein kinase family. CSF-1/PDGF receptor subfamily. As to quaternary structure, interacts with homodimeric PDGFA, PDGFB and PDGFC, and with heterodimers formed by PDGFA and PDGFB. Monomer in the absence of bound ligand. Interaction with dimeric PDGFA, PDGFB and/or PDGFC leads to receptor dimerization, where both PDGFRA homodimers and heterodimers with PDGFRB are observed. Interacts (tyrosine phosphorylated) with SHB (via SH2 domain). Interacts (tyrosine phosphorylated) with SHF (via SH2 domain). Interacts (tyrosine phosphorylated) with SRC (via SH2 domain). Interacts (tyrosine phosphorylated) with PIK3R1. Interacts (tyrosine phosphorylated) with PLCG1 (via SH2 domain). Interacts (tyrosine phosphorylated) with CRK, GRB2 and GRB7. Interacts with CD248; this interaction promotes PDGF receptor signaling pathway. Ubiquitinated, leading to its internalization and degradation. Post-translationally, autophosphorylated on tyrosine residues upon ligand binding. Autophosphorylation occurs in trans, i.e. one subunit of the dimeric receptor phosphorylates tyrosine residues on the other subunit. Phosphorylation at Tyr-731 and Tyr-742 is important for interaction with PIK3R1. Phosphorylation at Tyr-720 and Tyr-754 is important for interaction with PTPN11. Phosphorylation at Tyr-762 is important for interaction with CRK. Phosphorylation at Tyr-572 and Tyr-574 is important for interaction with SRC and SRC family members. Phosphorylation at Tyr-988 and Tyr-1018 is important for interaction with PLCG1. As to expression, focally expressed in cortical interstitial cells and highly expressed in the interstitium of the papillary region. Also expressed by adventitial cells in arterial vessels. Up-regulated in areas of renal fibrosis. In mice with unilateral ureteral obstruction, expression in cortical interstitial cells becomes prominent at day 4 which increases progressively until day 14.

Its subcellular location is the cell membrane. The protein resides in the cell projection. The protein localises to the cilium. It is found in the golgi apparatus. It catalyses the reaction L-tyrosyl-[protein] + ATP = O-phospho-L-tyrosyl-[protein] + ADP + H(+). Its activity is regulated as follows. Present in an inactive conformation in the absence of bound ligand. Binding of PDGFA and/or PDGFB leads to dimerization and activation by autophosphorylation on tyrosine residues. Inhibited by imatinib, nilotinib and sorafenib. Tyrosine-protein kinase that acts as a cell-surface receptor for PDGFA, PDGFB and PDGFC and plays an essential role in the regulation of embryonic development, cell proliferation, survival and chemotaxis. Depending on the context, promotes or inhibits cell proliferation and cell migration. Plays an important role in the differentiation of bone marrow-derived mesenchymal stem cells. Required for normal skeleton development and cephalic closure during embryonic development. Required for normal development of the mucosa lining the gastrointestinal tract, and for recruitment of mesenchymal cells and normal development of intestinal villi. Plays a role in cell migration and chemotaxis in wound healing. Plays a role in platelet activation, secretion of agonists from platelet granules, and in thrombin-induced platelet aggregation. Binding of its cognate ligands - homodimeric PDGFA, homodimeric PDGFB, heterodimers formed by PDGFA and PDGFB or homodimeric PDGFC -leads to the activation of several signaling cascades; the response depends on the nature of the bound ligand and is modulated by the formation of heterodimers between PDGFRA and PDGFRB. Phosphorylates PIK3R1, PLCG1, and PTPN11. Activation of PLCG1 leads to the production of the cellular signaling molecules diacylglycerol and inositol 1,4,5-trisphosphate, mobilization of cytosolic Ca(2+) and the activation of protein kinase C. Phosphorylates PIK3R1, the regulatory subunit of phosphatidylinositol 3-kinase, and thereby mediates activation of the AKT1 signaling pathway. Mediates activation of HRAS and of the MAP kinases MAPK1/ERK2 and/or MAPK3/ERK1. Promotes activation of STAT family members STAT1, STAT3 and STAT5A and/or STAT5B. Receptor signaling is down-regulated by protein phosphatases that dephosphorylate the receptor and its down-stream effectors, and by rapid internalization of the activated receptor. The protein is Platelet-derived growth factor receptor alpha (Pdgfra) of Mus musculus (Mouse).